The primary structure comprises 202 residues: B-cell CLL/lymphoma 7 protein family member B (202 aa).

The segment at Asp53–Ser202 is disordered. The segment covering Glu90 to Asp99 has biased composition (polar residues). Low complexity predominate over residues Ser107–Pro123. 7 positions are modified to phosphoserine: Ser114, Ser118, Ser120, Ser122, Ser127, Ser148, and Ser152.

Belongs to the BCL7 family.

Positive regulator of apoptosis. Plays a role in the Wnt signaling pathway, negatively regulating the expression of Wnt signaling components CTNNB1 and HMGA1. Involved in cell cycle progression, maintenance of the nuclear structure and stem cell differentiation. May play a role in lung tumor development or progression. The polypeptide is B-cell CLL/lymphoma 7 protein family member B (BCL7B) (Bos taurus (Bovine)).